A 255-amino-acid chain; its full sequence is uncharacterized protein (255 aa).

An N-terminal signal peptide occupies residues Met1 to Ala28. Residues Asn38, Asn61, and Asn83 are each glycosylated (N-linked (GlcNAc...) asparagine).

It localises to the secreted. This is an uncharacterized protein from Dictyostelium discoideum (Social amoeba).